Reading from the N-terminus, the 492-residue chain is Cobyric acid synthase (492 aa).

In terms of domain architecture, GATase cobBQ-type spans 259–453; it reads HTTVAVVAYP…LHGLFEDAVA (195 aa). Cys-340 serves as the catalytic Nucleophile. The active site involves His-445.

This sequence belongs to the CobB/CobQ family. CobQ subfamily.

The protein operates within cofactor biosynthesis; adenosylcobalamin biosynthesis. Functionally, catalyzes amidations at positions B, D, E, and G on adenosylcobyrinic A,C-diamide. NH(2) groups are provided by glutamine, and one molecule of ATP is hydrogenolyzed for each amidation. In Paracidovorax citrulli (strain AAC00-1) (Acidovorax citrulli), this protein is Cobyric acid synthase.